We begin with the raw amino-acid sequence, 431 residues long: ABSCISIC ACID-INSENSITIVE 5-like protein 7 (431 aa).

The tract at residues 1-29 (MGTHINFNNLGGGGHPGGEGSSNQMKPTG) is disordered. Residues 10 to 20 (LGGGGHPGGEG) show a composition bias toward gly residues. Residues serine 39 and serine 61 each carry the phosphoserine modification. The residue at position 110 (serine 110) is a Phosphoserine; by CPK32. Positions 133-153 (DGNMEGSSGGGGESNVPPGRQ) are disordered. Threonine 155 carries the post-translational modification Phosphothreonine. Positions 319–331 (SPGTSSAENNSLS) are enriched in polar residues. Residues 319–338 (SPGTSSAENNSLSPVPYVLN) form a disordered region. A Nuclear localization signal motif is present at residues 340-347 (GRRSNTGL). A bZIP domain is found at 351-414 (IERRQRRMIK…KNELKETSKR (64 aa)). The interval 353-372 (RRQRRMIKNRESAARSRARK) is basic motif. Residues 372–411 (KQAYTLELEAEIEKLKKTNQELQKKQAEMVEMQKNELKET) are a coiled coil. The segment at 379-393 (LEAEIEKLKKTNQEL) is leucine-zipper.

The protein belongs to the bZIP family. ABI5 subfamily. In terms of assembly, DNA-binding heterodimer. Interacts with CPK32 and the AFP proteins AFP1, AFP2 and AFP3. Interacts with FREE1 (via C-terminus). Post-translationally, phosphorylated by CPK4 and CPK11 in vitro. In terms of tissue distribution, expressed in roots, leaves, flowers and immatures siliques.

The protein resides in the nucleus. Functionally, functions as a transcriptional activator in the ABA-inducible expression of LTI65/RD29B (AC Q04980). Binds specifically to the ABA-responsive element (ABRE) of the LTI65/RD29B (AC Q04980) gene promoter. Binds to the promoter of FREE1 and activates its transcription. This Arabidopsis thaliana (Mouse-ear cress) protein is ABSCISIC ACID-INSENSITIVE 5-like protein 7.